Here is a 62-residue protein sequence, read N- to C-terminus: Large ribosomal subunit protein uL29 (62 aa).

The protein belongs to the universal ribosomal protein uL29 family.

This is Large ribosomal subunit protein uL29 from Amoebophilus asiaticus (strain 5a2).